Reading from the N-terminus, the 141-residue chain is uncharacterized protein (141 aa).

One can recognise an HIT domain in the interval 10–117 (IFCDIVQGSI…VPKYETGKGF (108 aa)). A Histidine triad motif motif is present at residues 102–106 (HFHLH).

This is an uncharacterized protein from Mycoplasma genitalium (strain ATCC 33530 / DSM 19775 / NCTC 10195 / G37) (Mycoplasmoides genitalium).